The following is a 292-amino-acid chain: Porphobilinogen deaminase (292 aa).

At Cys235 the chain carries S-(dipyrrolylmethanemethyl)cysteine.

It belongs to the HMBS family. In terms of assembly, monomer. It depends on dipyrromethane as a cofactor.

The catalysed reaction is 4 porphobilinogen + H2O = hydroxymethylbilane + 4 NH4(+). It functions in the pathway porphyrin-containing compound metabolism; protoporphyrin-IX biosynthesis; coproporphyrinogen-III from 5-aminolevulinate: step 2/4. Tetrapolymerization of the monopyrrole PBG into the hydroxymethylbilane pre-uroporphyrinogen in several discrete steps. This chain is Porphobilinogen deaminase, found in Acetivibrio thermocellus (strain ATCC 27405 / DSM 1237 / JCM 9322 / NBRC 103400 / NCIMB 10682 / NRRL B-4536 / VPI 7372) (Clostridium thermocellum).